A 262-amino-acid chain; its full sequence is Phosphonates import ATP-binding protein PhnC (262 aa).

The 249-residue stretch at Ile5–Asn253 folds into the ABC transporter domain. Residue Gly37–Ser44 coordinates ATP.

This sequence belongs to the ABC transporter superfamily. Phosphonates importer (TC 3.A.1.9.1) family. In terms of assembly, the complex is composed of two ATP-binding proteins (PhnC), two transmembrane proteins (PhnE) and a solute-binding protein (PhnD).

The protein resides in the cell inner membrane. It catalyses the reaction phosphonate(out) + ATP + H2O = phosphonate(in) + ADP + phosphate + H(+). Its function is as follows. Part of the ABC transporter complex PhnCDE involved in phosphonates import. Responsible for energy coupling to the transport system. The sequence is that of Phosphonates import ATP-binding protein PhnC from Escherichia coli O157:H7.